The following is a 416-amino-acid chain: Ribulose bisphosphate carboxylase large chain (416 aa).

Substrate is bound by residues asparagine 100 and threonine 150. The active-site Proton acceptor is lysine 152. Residue lysine 154 participates in substrate binding. Mg(2+) contacts are provided by lysine 178, aspartate 180, and glutamate 181. Lysine 178 carries the N6-carboxylysine modification. The active-site Proton acceptor is the histidine 271. 3 residues coordinate substrate: arginine 272, histidine 304, and serine 356.

The protein belongs to the RuBisCO large chain family. Type I subfamily. Heterohexadecamer of 8 large chains and 8 small chains; disulfide-linked. The disulfide link is formed within the large subunit homodimers. It depends on Mg(2+) as a cofactor. The disulfide bond which can form in the large chain dimeric partners within the hexadecamer appears to be associated with oxidative stress and protein turnover.

Its subcellular location is the plastid. The protein resides in the chloroplast. The catalysed reaction is 2 (2R)-3-phosphoglycerate + 2 H(+) = D-ribulose 1,5-bisphosphate + CO2 + H2O. It catalyses the reaction D-ribulose 1,5-bisphosphate + O2 = 2-phosphoglycolate + (2R)-3-phosphoglycerate + 2 H(+). In terms of biological role, ruBisCO catalyzes two reactions: the carboxylation of D-ribulose 1,5-bisphosphate, the primary event in carbon dioxide fixation, as well as the oxidative fragmentation of the pentose substrate in the photorespiration process. Both reactions occur simultaneously and in competition at the same active site. This chain is Ribulose bisphosphate carboxylase large chain (rbcL), found in Cheiropleuria bicuspis (Fern).